The primary structure comprises 507 residues: TOM1-like protein 2 (507 aa).

The VHS domain occupies 20 to 152 (ATDGSLQSED…ELKRRGIEFP (133 aa)). Ser160 carries the post-translational modification Phosphoserine. Thr164 is subject to Phosphothreonine. Positions 164–200 (TPQRSVPEMDPAATIPRSQTQPRTTAGTYSSPPPASY) are disordered. Positions 219–307 (EQIARLRSEL…VFLRYERFER (89 aa)) constitute a GAT domain. The Clathrin-binding signature appears at 329–334 (NLIDLG). The interval 466–507 (ERAKAAETVPDLPSPPTEAPAPASNTSTRKKPERSDDALFAL) is disordered. A compositionally biased stretch (basic and acidic residues) spans 498-507 (ERSDDALFAL).

Belongs to the TOM1 family. In terms of assembly, interacts with clathrin, SRC and TOLLIP. Interacts with MYO6. In terms of tissue distribution, ubiquitously expressed. Splicing pattern displays tissue specific variation.

Functionally, acts as a MYO6/Myosin VI adapter protein that targets myosin VI to endocytic structures. May also play a role in recruiting clathrin to endosomes. May regulate growth factor-induced mitogenic signaling. The chain is TOM1-like protein 2 (Tom1l2) from Mus musculus (Mouse).